The chain runs to 647 residues: Solute carrier family 23 member 2 (647 aa).

Residues 1-11 (MMGVGKNTSKS) are compositionally biased toward polar residues. Residues 1 to 26 (MMGVGKNTSKSVEVGGSTEGKYEEEA) form a disordered region. Residues 8–109 (TSKSVEVGGS…LCIFLGLQHY (102 aa)) are Cytoplasmic-facing. Serine 69 is modified (phosphoserine). Phosphothreonine is present on threonine 74. Serine 77 bears the Phosphoserine mark. Phosphothreonine is present on threonine 78. Phosphoserine is present on serine 80. A helical membrane pass occupies residues 110-130 (LTCFSGTIAVPFLLADAMCVG). The Extracellular segment spans residues 131 to 138 (DDQWATSQ). The helical transmembrane segment at 139–159 (LIGTIFFCVGITTLLQTTFGC) threads the bilayer. Arginine 160 is a topological domain (cytoplasmic). Residues 161–181 (LPLFQASAFAFLAPARAILSL) form a helical membrane-spanning segment. The Extracellular portion of the chain corresponds to 182–215 (DKWKCNTTEITVANGTAELLEHIWHPRIQEIQGA). Asparagine 187 and asparagine 195 each carry an N-linked (GlcNAc...) asparagine glycan. The chain crosses the membrane as a helical span at residues 216–236 (IIMSSLIEVVIGLLGLPGALL). Over 237–263 (RYIGPLTITPTVALIGLSGFQAAGERA) the chain is Cytoplasmic. The helical transmembrane segment at 264-281 (GKHWGIAMLTIFLVLLFS) threads the bilayer. At 282-285 (QYAR) the chain is on the extracellular side. Residues 286–299 (NVKFPLPIYKSKKG) constitute an intramembrane region (helical). Topologically, residues 300 to 306 (WTAYKLQ) are extracellular. The helical transmembrane segment at 307–327 (LFKMFPIILAILVSWLLCFIF) threads the bilayer. Residues 328–368 (TVTDVFPSNSTDYGYYARTDARKGVLLVAPWFKVPYPFQWG) lie on the Cytoplasmic side of the membrane. Residues 369–389 (MPTVSAAGVIGMLSAVVASII) form a helical membrane-spanning segment. Residues 390–414 (ESIGDYYACARLSCAPPPPIHAINR) lie on the Extracellular side of the membrane. The helical transmembrane segment at 415–435 (GIFVEGLSCVLDGVFGTGNGS) threads the bilayer. The Cytoplasmic segment spans residues 436–458 (TSSSPNIGVLGITKVGSRRVIQY). A helical transmembrane segment spans residues 459–479 (GAALMLGLGMIGKFSALFASL). Residues 480–482 (PDP) are Extracellular-facing. The helical transmembrane segment at 483-503 (VLGALFCTLFGMITAVGLSNL) threads the bilayer. Residues 504 to 513 (QFIDLNSSRN) are Cytoplasmic-facing. A helical transmembrane segment spans residues 514–534 (LFVLGFSIFFGLVLPSYLRQN). At 535-544 (PLVTGITGID) the chain is on the extracellular side. A helical membrane pass occupies residues 545-565 (QVLNVLLTTAMFVGGCVAFIL). Topologically, residues 566–647 (DNTIPGTPEE…SSDKDSQATV (82 aa)) are cytoplasmic. Threonine 646 carries the phosphothreonine modification.

It belongs to the nucleobase:cation symporter-2 (NCS2) (TC 2.A.40) family. As to quaternary structure, interacts with CLSTN3. Phosphorylated. Highly expressed in neural, neuroendocrine, exocrine and endothelial tissues and in osteoblasts. Detected in neurons throughout the central nervous system, in meninges and choroid plexus, in the anterior pituitary, the intermediate lobe, in pancreas, adrenal cortex, gastric glands, and in the inner nuclear layer of the retina.

It is found in the cell membrane. The catalysed reaction is L-ascorbate(out) + 2 Na(+)(out) = L-ascorbate(in) + 2 Na(+)(in). In terms of biological role, sodium/ascorbate cotransporter. Mediates electrogenic uptake of vitamin C, with a stoichiometry of 2 Na(+) for each ascorbate. This Rattus norvegicus (Rat) protein is Solute carrier family 23 member 2 (Slc23a2).